We begin with the raw amino-acid sequence, 358 residues long: Cyclin-dependent kinase 10 (358 aa).

Residues 37-321 (FEKLNRIGEG…AGDCLESSYF (285 aa)) enclose the Protein kinase domain. Residues 43–51 (IGEGTYGIV) and Lys66 each bind ATP. Asp161 acts as the Proton acceptor in catalysis. At Thr194 the chain carries Phosphothreonine. Positions 332-358 (LMPTFPHHRNKRAAPAATEGQSKRCRP) are disordered.

It belongs to the protein kinase superfamily. CMGC Ser/Thr protein kinase family. CDC2/CDKX subfamily. Heterodimer with CCNQ, the interaction is required for kinase activity. Interacts with ETS2. Interacts with PRK2.

It is found in the cytoplasm. It localises to the cytoskeleton. Its subcellular location is the cilium basal body. The catalysed reaction is L-seryl-[protein] + ATP = O-phospho-L-seryl-[protein] + ADP + H(+). It carries out the reaction L-threonyl-[protein] + ATP = O-phospho-L-threonyl-[protein] + ADP + H(+). Functionally, cyclin-dependent kinase that phosphorylates the transcription factor ETS2 (in vitro) and positively controls its proteasomal degradation (in cells). Involved in the regulation of actin cytoskeleton organization through the phosphorylation of actin dynamics regulators such as PKN2. Is a negative regulator of ciliogenesis through phosphorylation of PKN2 and promotion of RhoA signaling. In Rattus norvegicus (Rat), this protein is Cyclin-dependent kinase 10 (Cdk10).